Reading from the N-terminus, the 226-residue chain is Probable transcriptional regulator RABBIT EARS (226 aa).

The C2H2-type zinc-finger motif lies at Tyr55–His77. The segment at Asp80–Cys102 is disordered. Over residues Lys85–Ala97 the composition is skewed to polar residues. An EAR-like (transcriptional repression) motif is present at residues Leu212–Leu216.

Strongly expressed in inflorescences and flowers, and weakly in siliques, seedlings and roots. In flowers, it is expressed in petal primordia and their precursor cells. Also expressed in the lateral root caps and the basal cells of lateral roots.

The protein resides in the nucleus. Probable transcriptional regulator essential for petal development. Required for the early development of the organ primordia of the second whorl. Acts downstream of AP1 and PTL. The sequence is that of Probable transcriptional regulator RABBIT EARS (RBE) from Arabidopsis thaliana (Mouse-ear cress).